We begin with the raw amino-acid sequence, 56 residues long: Large ribosomal subunit protein bL32c (56 aa).

Belongs to the bacterial ribosomal protein bL32 family.

The protein resides in the plastid. It is found in the chloroplast. In Huperzia lucidula (Shining clubmoss), this protein is Large ribosomal subunit protein bL32c.